A 368-amino-acid polypeptide reads, in one-letter code: Alanine racemase (368 aa).

Catalysis depends on Lys34, which acts as the Proton acceptor; specific for D-alanine. Lys34 is modified (N6-(pyridoxal phosphate)lysine). Arg132 is a substrate binding site. Tyr261 serves as the catalytic Proton acceptor; specific for L-alanine. Residue Met309 participates in substrate binding.

It belongs to the alanine racemase family. Pyridoxal 5'-phosphate serves as cofactor.

It carries out the reaction L-alanine = D-alanine. It functions in the pathway amino-acid biosynthesis; D-alanine biosynthesis; D-alanine from L-alanine: step 1/1. Catalyzes the interconversion of L-alanine and D-alanine. May also act on other amino acids. This Carboxydothermus hydrogenoformans (strain ATCC BAA-161 / DSM 6008 / Z-2901) protein is Alanine racemase (alr).